The following is a 98-amino-acid chain: Putative pterin-4-alpha-carbinolamine dehydratase (98 aa).

It belongs to the pterin-4-alpha-carbinolamine dehydratase family.

The catalysed reaction is (4aS,6R)-4a-hydroxy-L-erythro-5,6,7,8-tetrahydrobiopterin = (6R)-L-erythro-6,7-dihydrobiopterin + H2O. This is Putative pterin-4-alpha-carbinolamine dehydratase from Parasynechococcus marenigrum (strain WH8102).